Consider the following 561-residue polypeptide: Carboxylesterase 4A (561 aa).

The N-terminal stretch at 1–20 (MRWILCWSLTLCLMAQTALG) is a signal peptide. A disulfide bridge links Cys-88 with Cys-116. Asn-214 is a glycosylation site (N-linked (GlcNAc...) asparagine). Ser-221 acts as the Acyl-ester intermediate in catalysis. Cysteines 273 and 284 form a disulfide. Asn-276 carries an N-linked (GlcNAc...) asparagine glycan. The active-site Charge relay system is the Glu-353. N-linked (GlcNAc...) asparagine glycosylation occurs at Asn-388. His-467 functions as the Charge relay system in the catalytic mechanism.

It belongs to the type-B carboxylesterase/lipase family.

Its subcellular location is the secreted. Probable carboxylesterase. The sequence is that of Carboxylesterase 4A (CES4A) from Homo sapiens (Human).